The chain runs to 382 residues: Porin-like protein BU359 (382 aa).

An N-terminal signal peptide occupies residues 1-23; sequence MTNRKSLAMVIPMLLAASNGVNA.

It belongs to the Gram-negative porin family. Homotrimer.

It is found in the cell outer membrane. Its function is as follows. Forms pores that allow passive diffusion of small molecules across the membrane. The protein is Porin-like protein BU359 of Buchnera aphidicola subsp. Acyrthosiphon pisum (strain APS) (Acyrthosiphon pisum symbiotic bacterium).